A 640-amino-acid chain; its full sequence is Threonine--tRNA ligase (640 aa).

The region spanning 1–61 (MPTITLPDGS…DSDATLQIIT (61 aa)) is the TGS domain. Positions 242-533 (DHRKIGKRLG…LIEHYEGAFP (292 aa)) are catalytic. Zn(2+) is bound by residues C333, H384, and H510.

The protein belongs to the class-II aminoacyl-tRNA synthetase family. Homodimer. It depends on Zn(2+) as a cofactor.

Its subcellular location is the cytoplasm. The enzyme catalyses tRNA(Thr) + L-threonine + ATP = L-threonyl-tRNA(Thr) + AMP + diphosphate + H(+). Its function is as follows. Catalyzes the attachment of threonine to tRNA(Thr) in a two-step reaction: L-threonine is first activated by ATP to form Thr-AMP and then transferred to the acceptor end of tRNA(Thr). Also edits incorrectly charged L-seryl-tRNA(Thr). This is Threonine--tRNA ligase from Pseudomonas fluorescens (strain Pf0-1).